The chain runs to 121 residues: ATP synthase epsilon chain (121 aa).

The protein belongs to the ATPase epsilon chain family. As to quaternary structure, F-type ATPases have 2 components, CF(1) - the catalytic core - and CF(0) - the membrane proton channel. CF(1) has five subunits: alpha(3), beta(3), gamma(1), delta(1), epsilon(1). CF(0) has three main subunits: a, b and c.

Its subcellular location is the cell membrane. Functionally, produces ATP from ADP in the presence of a proton gradient across the membrane. This is ATP synthase epsilon chain from Mycobacterium leprae (strain Br4923).